The following is a 474-amino-acid chain: Trehalose-6-phosphate synthase (474 aa).

Arginine 10 contributes to the D-glucose 6-phosphate binding site. 22–23 (GG) contacts UDP-alpha-D-glucose. D-glucose 6-phosphate contacts are provided by tyrosine 77 and aspartate 131. UDP-alpha-D-glucose-binding residues include arginine 263 and lysine 268. Position 301 (arginine 301) interacts with D-glucose 6-phosphate. UDP-alpha-D-glucose contacts are provided by residues phenylalanine 340 and 366–370 (LVAKE).

Belongs to the glycosyltransferase 20 family. In terms of assembly, homotetramer.

The catalysed reaction is D-glucose 6-phosphate + UDP-alpha-D-glucose = alpha,alpha-trehalose 6-phosphate + UDP + H(+). The protein operates within glycan biosynthesis; trehalose biosynthesis. Its function is as follows. Probably involved in the osmoprotection via the biosynthesis of trehalose. Catalyzes the transfer of glucose from UDP-alpha-D-glucose (UDP-Glc) to D-glucose 6-phosphate (Glc-6-P) to form trehalose-6-phosphate. Acts with retention of the anomeric configuration of the UDP-sugar donor. This Shigella dysenteriae serotype 1 (strain Sd197) protein is Trehalose-6-phosphate synthase.